Reading from the N-terminus, the 200-residue chain is Cation channel sperm-associated auxiliary subunit zeta (200 aa).

A compositionally biased stretch (basic and acidic residues) spans 1-29; sequence MEEKPSKVSLKSSDRQGSDEESVHSDTRD. Disordered regions lie at residues 1 to 31 and 58 to 78; these read MEEK…RDLW and NISK…EGYK.

Component of the CatSper complex or CatSpermasome composed of the core pore-forming members CATSPER1, CATSPER2, CATSPER3 and CATSPER4 as well as auxiliary members CATSPERB, CATSPERG, CATSPERD, CATSPERE, CATSPERZ, C2CD6/CATSPERT, TMEM249, TMEM262 and EFCAB9. HSPA1 may be an additional auxiliary complex member. The core complex members CATSPER1, CATSPER2, CATSPER3 and CATSPER4 form a heterotetrameric channel. The auxiliary CATSPERB, CATSPERG, CATSPERD and CATSPERE subunits form a pavilion-like structure over the pore which stabilizes the complex through interactions with CATSPER4, CATSPER3, CATSPER1 and CATSPER2 respectively. TMEM262/CATSPERH interacts with CATSPERB, further stabilizing the complex. C2CD6/CATSPERT interacts at least with CATSPERD and is required for targeting the CatSper complex in the flagellar membrane. Interacts with EFCAB9; the interaction is direct, Ca(2+)-dependent and connects EFCAB9 with the CatSper complex. Dissociates from EFCAB9 at elevated pH.

The protein resides in the cell projection. It is found in the cilium. It localises to the flagellum membrane. Auxiliary component of the CatSper complex, a complex involved in sperm cell hyperactivation. Sperm cell hyperactivation is needed for sperm motility which is essential late in the preparation of sperm for fertilization. Required for a distribution of the CatSper complex in linear quadrilateral nanodomains along the flagellum, maximizing fertilization inside the mammalian female reproductive tract. Together with EFCAB9, associates with the CatSper channel pore and is required for the two-row structure of each single CatSper channel. The polypeptide is Cation channel sperm-associated auxiliary subunit zeta (Homo sapiens (Human)).